We begin with the raw amino-acid sequence, 134 residues long: Acyl carrier protein, chloroplastic (134 aa).

A chloroplast-targeting transit peptide spans 1-51; sequence MSTTFCSSVSMQATSLAATTRISFQKPALVSRTNLSFNLSRSIPTRLSVSC. Residues 55-130 enclose the Carrier domain; that stretch reads PETVEKVSKI…EAAELIDELV (76 aa). An O-(pantetheine 4'-phosphoryl)serine modification is found at serine 90.

Belongs to the acyl carrier protein (ACP) family. Post-translationally, 4'-phosphopantetheine is transferred from CoA to a specific serine of apo-ACP by acpS. This modification is essential for activity because fatty acids are bound in thioester linkage to the sulfhydryl of the prosthetic group. As to expression, seed.

The protein localises to the plastid. It localises to the chloroplast. It participates in lipid metabolism; fatty acid biosynthesis. Functionally, carrier of the growing fatty acid chain in fatty acid biosynthesis. The polypeptide is Acyl carrier protein, chloroplastic (ACL1.A1) (Brassica napus (Rape)).